Here is a 203-residue protein sequence, read N- to C-terminus: MLQYSKKKVSLNFFPVRLLSYKMTRISDAIFKDHRKLQSDYQNIKSANDYDTATRWQNQFVWELARHSVGEEIVVYPKFEKYLGEEGKEMAEKDRHEHQLVKEMLYKFQSMKANQSNFIPALDELMESLQKHIDEEEQHDIPFLEKHLSEEESLHMASSFERTKKFVPTHSHPSAPNKPPFETVAGLFAAPIDKLRDMMEKWP.

Positions 34, 97, and 172 each coordinate Fe cation.

Belongs to the hemerythrin family.

It is found in the mitochondrion. This is an uncharacterized protein from Schizosaccharomyces pombe (strain 972 / ATCC 24843) (Fission yeast).